A 374-amino-acid chain; its full sequence is Queuine tRNA-ribosyltransferase (374 aa).

Asp-89 functions as the Proton acceptor in the catalytic mechanism. Residues 89–93 (DSGGF), Asp-143, Gln-187, and Gly-214 each bind substrate. The tract at residues 245 to 251 (GVGKPED) is RNA binding. Asp-264 functions as the Nucleophile in the catalytic mechanism. The interval 269-273 (TRNAR) is RNA binding; important for wobble base 34 recognition. Zn(2+)-binding residues include Cys-302, Cys-304, Cys-307, and His-333.

The protein belongs to the queuine tRNA-ribosyltransferase family. Homodimer. Within each dimer, one monomer is responsible for RNA recognition and catalysis, while the other monomer binds to the replacement base PreQ1. The cofactor is Zn(2+).

The catalysed reaction is 7-aminomethyl-7-carbaguanine + guanosine(34) in tRNA = 7-aminomethyl-7-carbaguanosine(34) in tRNA + guanine. It participates in tRNA modification; tRNA-queuosine biosynthesis. In terms of biological role, catalyzes the base-exchange of a guanine (G) residue with the queuine precursor 7-aminomethyl-7-deazaguanine (PreQ1) at position 34 (anticodon wobble position) in tRNAs with GU(N) anticodons (tRNA-Asp, -Asn, -His and -Tyr). Catalysis occurs through a double-displacement mechanism. The nucleophile active site attacks the C1' of nucleotide 34 to detach the guanine base from the RNA, forming a covalent enzyme-RNA intermediate. The proton acceptor active site deprotonates the incoming PreQ1, allowing a nucleophilic attack on the C1' of the ribose to form the product. After dissociation, two additional enzymatic reactions on the tRNA convert PreQ1 to queuine (Q), resulting in the hypermodified nucleoside queuosine (7-(((4,5-cis-dihydroxy-2-cyclopenten-1-yl)amino)methyl)-7-deazaguanosine). The chain is Queuine tRNA-ribosyltransferase from Shewanella loihica (strain ATCC BAA-1088 / PV-4).